The chain runs to 556 residues: Glucose-6-phosphate isomerase (556 aa).

Catalysis depends on glutamate 364, which acts as the Proton donor. Residues histidine 395 and lysine 521 contribute to the active site.

This sequence belongs to the GPI family.

It is found in the cytoplasm. The enzyme catalyses alpha-D-glucose 6-phosphate = beta-D-fructose 6-phosphate. It functions in the pathway carbohydrate biosynthesis; gluconeogenesis. It participates in carbohydrate degradation; glycolysis; D-glyceraldehyde 3-phosphate and glycerone phosphate from D-glucose: step 2/4. Catalyzes the reversible isomerization of glucose-6-phosphate to fructose-6-phosphate. The polypeptide is Glucose-6-phosphate isomerase (Corynebacterium kroppenstedtii (strain DSM 44385 / JCM 11950 / CIP 105744 / CCUG 35717)).